The primary structure comprises 198 residues: Ribosome maturation factor RimP (198 aa).

It belongs to the RimP family.

The protein localises to the cytoplasm. In terms of biological role, required for maturation of 30S ribosomal subunits. This is Ribosome maturation factor RimP from Rhizobium rhizogenes (strain K84 / ATCC BAA-868) (Agrobacterium radiobacter).